The chain runs to 251 residues: Electron transfer flavoprotein subunit beta, mitochondrial (251 aa).

This sequence belongs to the ETF beta-subunit/FixA family. In terms of assembly, heterodimer of an alpha and a beta subunit. Requires FAD as cofactor. The cofactor is AMP.

The protein resides in the mitochondrion matrix. The electron transfer flavoprotein serves as a specific electron acceptor for several dehydrogenases, including five acyl-CoA dehydrogenases, glutaryl-CoA and sarcosine dehydrogenase. It transfers the electrons to the main mitochondrial respiratory chain via ETF-ubiquinone oxidoreductase (ETF dehydrogenase). Involved in leucine catabolism and in phytol degradation. The sequence is that of Electron transfer flavoprotein subunit beta, mitochondrial (ETFB) from Arabidopsis thaliana (Mouse-ear cress).